A 139-amino-acid polypeptide reads, in one-letter code: Holo-[acyl-carrier-protein] synthase (139 aa).

2 residues coordinate Mg(2+): aspartate 8 and glutamate 57.

It belongs to the P-Pant transferase superfamily. AcpS family. The cofactor is Mg(2+).

It is found in the cytoplasm. It carries out the reaction apo-[ACP] + CoA = holo-[ACP] + adenosine 3',5'-bisphosphate + H(+). In terms of biological role, transfers the 4'-phosphopantetheine moiety from coenzyme A to a Ser of acyl-carrier-protein. The protein is Holo-[acyl-carrier-protein] synthase of Sinorhizobium medicae (strain WSM419) (Ensifer medicae).